An 80-amino-acid polypeptide reads, in one-letter code: Acyl carrier protein (80 aa).

Residues 4 to 79 (DEIFSKVRSI…DVVNFIKKRK (76 aa)) form the Carrier domain. Position 39 is an O-(pantetheine 4'-phosphoryl)serine (serine 39).

It belongs to the acyl carrier protein (ACP) family. Post-translationally, 4'-phosphopantetheine is transferred from CoA to a specific serine of apo-ACP by AcpS. This modification is essential for activity because fatty acids are bound in thioester linkage to the sulfhydryl of the prosthetic group.

The protein localises to the cytoplasm. The protein operates within lipid metabolism; fatty acid biosynthesis. Carrier of the growing fatty acid chain in fatty acid biosynthesis. The protein is Acyl carrier protein of Borrelia garinii subsp. bavariensis (strain ATCC BAA-2496 / DSM 23469 / PBi) (Borreliella bavariensis).